Reading from the N-terminus, the 271-residue chain is Shikimate dehydrogenase (NADP(+)) (271 aa).

Shikimate contacts are provided by residues 14 to 16 (SQS) and Thr-61. Catalysis depends on Lys-65, which acts as the Proton acceptor. Shikimate is bound by residues Asn-86 and Asp-101. NADP(+) contacts are provided by residues 125–129 (GAGGA), 148–153 (NRTHAR), and Met-212. Residue Tyr-214 coordinates shikimate. Gly-236 is a binding site for NADP(+).

It belongs to the shikimate dehydrogenase family. As to quaternary structure, homodimer.

It carries out the reaction shikimate + NADP(+) = 3-dehydroshikimate + NADPH + H(+). The protein operates within metabolic intermediate biosynthesis; chorismate biosynthesis; chorismate from D-erythrose 4-phosphate and phosphoenolpyruvate: step 4/7. In terms of biological role, involved in the biosynthesis of the chorismate, which leads to the biosynthesis of aromatic amino acids. Catalyzes the reversible NADPH linked reduction of 3-dehydroshikimate (DHSA) to yield shikimate (SA). This chain is Shikimate dehydrogenase (NADP(+)), found in Edwardsiella ictaluri (strain 93-146).